Reading from the N-terminus, the 251-residue chain is S-acyl fatty acid synthase thioesterase, medium chain (251 aa).

Catalysis depends on residues Ser-90 and His-226.

The protein belongs to the thioesterase family.

The enzyme catalyses (9Z)-octadecenoyl-[ACP] + H2O = (9Z)-octadecenoate + holo-[ACP] + H(+). Functionally, in fatty acid biosynthesis chain termination and release of the free fatty acid product is achieved by hydrolysis of the thio ester by a thioesterase I, a component of the fatty acid synthetase complex. The chain length of the released fatty acid is usually C16. However, in the mammary glands of non-ruminant mammals, and in the uropygial gland of certain waterfowl there exists a second thioesterase which releases medium-chain length fatty acids (C8 to C2). The sequence is that of S-acyl fatty acid synthase thioesterase, medium chain from Anas platyrhynchos (Mallard).